The primary structure comprises 481 residues: Glutamine synthetase (481 aa).

In terms of domain architecture, GS beta-grasp spans 22-106 (NEVEFVDFRF…VFCDVYDVYK (85 aa)). The region spanning 114–481 (PRSIAKKALK…PFEFITTYSC (368 aa)) is the GS catalytic domain. Residues glutamate 139, glutamate 141, glutamate 223, and glutamate 230 each contribute to the Mg(2+) site. Residues 274-275 (NG) and glycine 275 each bind L-glutamate. Position 279 (histidine 279) interacts with Mg(2+). Residues 281 to 283 (HVS) and serine 283 each bind ATP. The L-glutamate site is built by arginine 331, glutamate 337, and arginine 349. Residues arginine 349 and arginine 354 each contribute to the ATP site. Residue glutamate 367 coordinates Mg(2+). Arginine 369 serves as a coordination point for L-glutamate.

It belongs to the glutamine synthetase family. As to quaternary structure, oligomer of 12 subunits arranged in the form of two hexameric ring. Requires Mg(2+) as cofactor.

The protein localises to the cytoplasm. The enzyme catalyses L-glutamate + NH4(+) + ATP = L-glutamine + ADP + phosphate + H(+). With respect to regulation, the activity of this enzyme could be controlled by adenylation under conditions of abundant glutamine. Functionally, catalyzes the ATP-dependent biosynthesis of glutamine from glutamate and ammonia. This chain is Glutamine synthetase, found in Helicobacter pylori (strain J99 / ATCC 700824) (Campylobacter pylori J99).